The following is a 198-amino-acid chain: tRNA (pseudouridine(54)-N(1))-methyltransferase (198 aa).

Leu128 provides a ligand contact to S-adenosyl-L-methionine.

It belongs to the methyltransferase superfamily. TrmY family. Homodimer.

The protein resides in the cytoplasm. It catalyses the reaction pseudouridine(54) in tRNA + S-adenosyl-L-methionine = N(1)-methylpseudouridine(54) in tRNA + S-adenosyl-L-homocysteine + H(+). Specifically catalyzes the N1-methylation of pseudouridine at position 54 (Psi54) in tRNAs. In Haloarcula marismortui (strain ATCC 43049 / DSM 3752 / JCM 8966 / VKM B-1809) (Halobacterium marismortui), this protein is tRNA (pseudouridine(54)-N(1))-methyltransferase.